The following is a 465-amino-acid chain: Chromosomal replication initiator protein DnaA (465 aa).

Residues 1-87 (MLWTDCLTRL…RPGSILSSSE (87 aa)) form a domain I, interacts with DnaA modulators region. The interval 81–123 (SILSSSEQPATTTAALQTAPIPQPAKGKREPEPVANTAVSSKS) is disordered. Low complexity predominate over residues 88-100 (QPATTTAALQTAP). A domain II region spans residues 88–127 (QPATTTAALQTAPIPQPAKGKREPEPVANTAVSSKSSKKK). The domain III, AAA+ region stretch occupies residues 128-345 (LLNPQFTFSL…GALNKVVAIS (218 aa)). Residues Gly173, Gly175, Lys176, and Thr177 each coordinate ATP. A domain IV, binds dsDNA region spans residues 346–465 (RFKGAPIDLD…YKNLLRLLQS (120 aa)).

It belongs to the DnaA family. As to quaternary structure, oligomerizes as a right-handed, spiral filament on DNA at oriC.

The protein resides in the cytoplasm. Plays an essential role in the initiation and regulation of chromosomal replication. ATP-DnaA binds to the origin of replication (oriC) to initiate formation of the DNA replication initiation complex once per cell cycle. Binds the DnaA box (a 9 base pair repeat at the origin) and separates the double-stranded (ds)DNA. Forms a right-handed helical filament on oriC DNA; dsDNA binds to the exterior of the filament while single-stranded (ss)DNA is stabiized in the filament's interior. The ATP-DnaA-oriC complex binds and stabilizes one strand of the AT-rich DNA unwinding element (DUE), permitting loading of DNA polymerase. After initiation quickly degrades to an ADP-DnaA complex that is not apt for DNA replication. Binds acidic phospholipids. This Acinetobacter baumannii (strain SDF) protein is Chromosomal replication initiator protein DnaA.